The following is a 75-amino-acid chain: Small ribosomal subunit protein bS18 (75 aa).

It belongs to the bacterial ribosomal protein bS18 family. Part of the 30S ribosomal subunit. Forms a tight heterodimer with protein bS6.

Binds as a heterodimer with protein bS6 to the central domain of the 16S rRNA, where it helps stabilize the platform of the 30S subunit. This Colwellia psychrerythraea (strain 34H / ATCC BAA-681) (Vibrio psychroerythus) protein is Small ribosomal subunit protein bS18.